Here is a 146-residue protein sequence, read N- to C-terminus: Transcription antitermination protein NusB (146 aa).

It belongs to the NusB family.

Functionally, involved in transcription antitermination. Required for transcription of ribosomal RNA (rRNA) genes. Binds specifically to the boxA antiterminator sequence of the ribosomal RNA (rrn) operons. This chain is Transcription antitermination protein NusB, found in Herpetosiphon aurantiacus (strain ATCC 23779 / DSM 785 / 114-95).